Consider the following 514-residue polypeptide: Zinc finger and BTB domain-containing protein 2 (514 aa).

The region spanning 24–89 (CDCTVAIGDV…MYTGKMAPQL (66 aa)) is the BTB domain. Residues Lys-147 and Lys-154 each participate in a glycyl lysine isopeptide (Lys-Gly) (interchain with G-Cter in SUMO2) cross-link. The segment at 149–231 (ASAPEKLGRD…LEASSSDEQP (83 aa)) is disordered. Polar residues-rich tracts occupy residues 161–200 (PQTS…PLQT) and 222–231 (LEASSSDEQP). The segment at 254-276 (YACHLCGRRFTLRSSLREHLQIH) adopts a C2H2-type 1 zinc-finger fold. The residue at position 341 (Ser-341) is a Phosphoserine. Lys-362 participates in a covalent cross-link: Glycyl lysine isopeptide (Lys-Gly) (interchain with G-Cter in SUMO2). A C2H2-type 2 zinc finger spans residues 363 to 385 (YECTICGRKFIQKSHWREHMYIH). Residues 390 to 410 (FKCSTCDKSFCRANQAARHVC) form a C2H2-type 3; atypical zinc finger. The C2H2-type 4; atypical zinc-finger motif lies at 448–468 (YKCNLCDKTFSTPNEVVKHSC). Residues Lys-465, Lys-505, and Lys-506 each participate in a glycyl lysine isopeptide (Lys-Gly) (interchain with G-Cter in SUMO2) cross-link.

The protein localises to the nucleus. Functionally, may be involved in transcriptional regulation. The polypeptide is Zinc finger and BTB domain-containing protein 2 (ZBTB2) (Homo sapiens (Human)).